Reading from the N-terminus, the 176-residue chain is MNNCTPNIKSSYGYEDLLASGRGELFGKEGPQLPAPTMLMMDRVNLMTENGGLFDKGYIEAELDIHPDLPFFGCHFIGDPVMPGCLGLDAMWQLVGFFLGWIGGKGKGRALGVGEVKFTGQILPTAKKVTYRIHMKRVINRKLVMGLADGEVEVDGRVIYTATDLKVGLFQDTSSF.

Residue histidine 75 is part of the active site.

Belongs to the thioester dehydratase family. FabA subfamily. In terms of assembly, homodimer.

It is found in the cytoplasm. It carries out the reaction a (3R)-hydroxyacyl-[ACP] = a (2E)-enoyl-[ACP] + H2O. The enzyme catalyses (3R)-hydroxydecanoyl-[ACP] = (2E)-decenoyl-[ACP] + H2O. It catalyses the reaction (2E)-decenoyl-[ACP] = (3Z)-decenoyl-[ACP]. It functions in the pathway lipid metabolism; fatty acid biosynthesis. Functionally, necessary for the introduction of cis unsaturation into fatty acids. Catalyzes the dehydration of (3R)-3-hydroxydecanoyl-ACP to E-(2)-decenoyl-ACP and then its isomerization to Z-(3)-decenoyl-ACP. Can catalyze the dehydratase reaction for beta-hydroxyacyl-ACPs with saturated chain lengths up to 16:0, being most active on intermediate chain length. The sequence is that of 3-hydroxydecanoyl-[acyl-carrier-protein] dehydratase from Haemophilus ducreyi (strain 35000HP / ATCC 700724).